Here is a 421-residue protein sequence, read N- to C-terminus: Serine hydroxymethyltransferase (421 aa).

(6S)-5,6,7,8-tetrahydrofolate contacts are provided by residues Leu-118 and 122–124 (GHL). Residue Lys-226 is modified to N6-(pyridoxal phosphate)lysine. A (6S)-5,6,7,8-tetrahydrofolate-binding site is contributed by Glu-242.

Belongs to the SHMT family. In terms of assembly, homodimer. Requires pyridoxal 5'-phosphate as cofactor.

It is found in the cytoplasm. It catalyses the reaction (6R)-5,10-methylene-5,6,7,8-tetrahydrofolate + glycine + H2O = (6S)-5,6,7,8-tetrahydrofolate + L-serine. It participates in one-carbon metabolism; tetrahydrofolate interconversion. It functions in the pathway amino-acid biosynthesis; glycine biosynthesis; glycine from L-serine: step 1/1. Catalyzes the reversible interconversion of serine and glycine with tetrahydrofolate (THF) serving as the one-carbon carrier. This reaction serves as the major source of one-carbon groups required for the biosynthesis of purines, thymidylate, methionine, and other important biomolecules. Also exhibits THF-independent aldolase activity toward beta-hydroxyamino acids, producing glycine and aldehydes, via a retro-aldol mechanism. This chain is Serine hydroxymethyltransferase, found in Mycoplasmopsis synoviae (strain 53) (Mycoplasma synoviae).